The sequence spans 261 residues: MVSMRDLLECGVHFGHQTRRWNPKMKKFIFGERKGIYVIDLQKTLRYFRYTYNIVRDAAAEGKTILFVGTKKQAGGAIKEYAEKCGMPYVNHRWLGGMMTNFGTIRQSIRKLEVIEKMEEDGSIKLLTKKEALMLTRKKEKLLAYLGGIRYMKTQPDMIFVIDTVKEKIAVQEANRLKIPVVAPLDTNCDPDLVDFPIPGNDDAIRSVQLFCQEMAEAINEGKALREQDGEANEEQPISEEEKKEVLEEAMSEEDFEGDKE.

The disordered stretch occupies residues 222-261 (GKALREQDGEANEEQPISEEEKKEVLEEAMSEEDFEGDKE). Acidic residues-rich tracts occupy residues 230-239 (GEANEEQPIS) and 248-261 (EEAM…GDKE).

Belongs to the universal ribosomal protein uS2 family.

This chain is Small ribosomal subunit protein uS2, found in Campylobacter lari (strain RM2100 / D67 / ATCC BAA-1060).